The chain runs to 365 residues: Protein Wnt-6 (365 aa).

The N-terminal stretch at 1–24 (MLPPLPSRLGLLLLLLLCPAHVGG) is a signal peptide. Intrachain disulfides connect cysteine 76-cysteine 87, cysteine 124-cysteine 132, cysteine 134-cysteine 172, cysteine 222-cysteine 236, cysteine 224-cysteine 231, cysteine 294-cysteine 325, cysteine 310-cysteine 320, cysteine 324-cysteine 364, cysteine 340-cysteine 355, cysteine 342-cysteine 352, and cysteine 347-cysteine 348. Asparagine 86 carries N-linked (GlcNAc...) asparagine glycosylation. The span at 140–158 (RAPPRPSGLPGTPGPPGPA) shows a compositional bias: pro residues. Residues 140 to 164 (RAPPRPSGLPGTPGPPGPAGSPEGS) form a disordered region. Serine 228 carries the O-palmitoleoyl serine; by PORCN lipid modification. Asparagine 311 carries N-linked (GlcNAc...) asparagine glycosylation.

This sequence belongs to the Wnt family. As to quaternary structure, interacts with PORCN. In terms of processing, palmitoleoylation is required for efficient binding to frizzled receptors. Depalmitoleoylation leads to Wnt signaling pathway inhibition. Expressed in gastric cancer cell lines and gastric cancer tissues (at protein level). Detected in the apical gland region of the gastric foveolar epithelium (at protein level).

It is found in the secreted. It localises to the extracellular space. Its subcellular location is the extracellular matrix. Functionally, ligand for members of the frizzled family of seven transmembrane receptors. Probable developmental protein. May be a signaling molecule which affects the development of discrete regions of tissues. Is likely to signal over only few cell diameters. Together with CAV1 may promote chemoresistance of gastric cancer cells to DNA-damaging anthracycline drugs through the activation of the canonical Wnt receptor signaling pathway. The sequence is that of Protein Wnt-6 (WNT6) from Homo sapiens (Human).